Here is a 311-residue protein sequence, read N- to C-terminus: Iron-binding protein YfeA (311 aa).

The signal sequence occupies residues 1-31 (MIERLNSPFLRAAALFTIVAFSSLISTAALA). Positions 76, 141, 207, and 282 each coordinate Fe(2+).

This sequence belongs to the bacterial solute-binding protein 9 family. As to quaternary structure, monomer.

Its subcellular location is the periplasm. Functionally, part of the ATP-binding cassette (ABC) transport system YfeABC involved in iron import. Binds iron with high affinity and specificity and delivers it to the membrane permease for translocation into the cytoplasm. Also binds Mn(2+) and Zn(2+). This is Iron-binding protein YfeA (yfeA) from Yersinia pestis.